The following is a 587-amino-acid chain: Mitogen-activated protein kinase 4 (587 aa).

One can recognise a Protein kinase domain in the interval 20–312 (FVDFQPLGFG…AEMGLQHPYM (293 aa)). ATP contacts are provided by residues 26–34 (LGFGVNGLV) and lysine 49. The active-site Proton acceptor is the aspartate 149. Serine 186 is modified (phosphoserine; by PAK1, PAK2 and PAK3). The SEG motif motif lies at 186 to 188 (SEG). The short motif at 328 to 333 (FRIEDE) is the FRIEDE motif element. Composition is skewed to basic and acidic residues over residues 373-383 (QDASEVQRDPR) and 395-413 (VDPR…EQSH). Residues 373 to 413 (QDASEVQRDPRAGSAPLAEDVQVDPRKDSHSSSERFLEQSH) are disordered. A Phosphoserine modification is found at serine 434. The segment at 499 to 534 (STQGGPEHASPPADDPERRLSASPPGRPAPVDGGAS) is disordered.

Belongs to the protein kinase superfamily. CMGC Ser/Thr protein kinase family. MAP kinase subfamily. Homodimer. Heterodimer with ERK3/MAPK6. Interacts with (via FRIEDE motif) MAPKAPK5. It depends on Mg(2+) as a cofactor. Phosphorylated at Ser-186 by PAK1, PAK2 and PAK3 resulting in catalytic activation. Phosphorylated by MAPKAPK5 at other sites. As to expression, high expression in heart and brain.

Its subcellular location is the cytoplasm. It localises to the nucleus. It catalyses the reaction L-seryl-[protein] + ATP = O-phospho-L-seryl-[protein] + ADP + H(+). It carries out the reaction L-threonyl-[protein] + ATP = O-phospho-L-threonyl-[protein] + ADP + H(+). With respect to regulation, activated by phosphorylation at Ser-186. Functionally, atypical MAPK protein. Phosphorylates microtubule-associated protein 2 (MAP2) and MAPKAPK5. The precise role of the complex formed with MAPKAPK5 is still unclear, but the complex follows a complex set of phosphorylation events: upon interaction with atypical MAPKAPK5, ERK4/MAPK4 is phosphorylated at Ser-186 and then mediates phosphorylation and activation of MAPKAPK5, which in turn phosphorylates ERK4/MAPK4. May promote entry in the cell cycle. This chain is Mitogen-activated protein kinase 4 (MAPK4), found in Homo sapiens (Human).